The following is a 92-amino-acid chain: Large ribosomal subunit protein eL43z (92 aa).

The C4-type zinc-finger motif lies at 39-60 (CEFCGKYSVKRKVVGIWGCKDC).

Belongs to the eukaryotic ribosomal protein eL43 family.

The protein is Large ribosomal subunit protein eL43z (RPL37AB) of Arabidopsis thaliana (Mouse-ear cress).